Consider the following 289-residue polypeptide: ATP synthase gamma chain (289 aa).

This sequence belongs to the ATPase gamma chain family. F-type ATPases have 2 components, CF(1) - the catalytic core - and CF(0) - the membrane proton channel. CF(1) has five subunits: alpha(3), beta(3), gamma(1), delta(1), epsilon(1). CF(0) has three main subunits: a, b and c.

Its subcellular location is the cell inner membrane. In terms of biological role, produces ATP from ADP in the presence of a proton gradient across the membrane. The gamma chain is believed to be important in regulating ATPase activity and the flow of protons through the CF(0) complex. This chain is ATP synthase gamma chain, found in Acinetobacter baylyi (strain ATCC 33305 / BD413 / ADP1).